The following is an 87-amino-acid chain: UPF0250 protein KPN78578_06520 (87 aa).

The protein belongs to the UPF0250 family.

This is UPF0250 protein KPN78578_06520 from Klebsiella pneumoniae subsp. pneumoniae (strain ATCC 700721 / MGH 78578).